Consider the following 600-residue polypeptide: Zinc metalloproteinase-disintegrin-like stejnihagin-B (600 aa).

A signal peptide spans 1-20 (MIEVLLVTICLAVFPYQGSS). Positions 21–191 (IILESGNVND…KASQLVVTAE (171 aa)) are excised as a propeptide. The residue at position 192 (glutamine 192) is a Pyrrolidone carboxylic acid. In terms of domain architecture, Peptidase M12B spans 198–389 (RYVKLAIVAD…YNPQCILNAL (192 aa)). Residues asparagine 261 and asparagine 317 are each glycosylated (N-linked (GlcNAc...) asparagine). 3 disulfides stabilise this stretch: cysteine 306–cysteine 384, cysteine 346–cysteine 368, and cysteine 348–cysteine 351. Histidine 331 provides a ligand contact to Zn(2+). Glutamate 332 is a catalytic residue. Histidine 335 and histidine 341 together coordinate Zn(2+). The Disintegrin domain occupies 397 to 483 (PPVCGNELLE…DCPTDSFHRN (87 aa)). Ca(2+) is bound by residues valine 399, asparagine 402, leucine 404, glutamate 406, glutamate 409, and aspartate 412. 14 cysteine pairs are disulfide-bonded: cysteine 400-cysteine 429, cysteine 411-cysteine 424, cysteine 413-cysteine 419, cysteine 423-cysteine 446, cysteine 437-cysteine 443, cysteine 442-cysteine 468, cysteine 455-cysteine 475, cysteine 462-cysteine 494, cysteine 487-cysteine 499, cysteine 506-cysteine 556, cysteine 521-cysteine 565, cysteine 534-cysteine 544, cysteine 551-cysteine 587, and cysteine 581-cysteine 593. A glycan (N-linked (GlcNAc...) asparagine) is linked at asparagine 425. Positions 461 to 463 (ECD) match the D/ECD-tripeptide motif. Asparagine 467 is a glycosylation site (N-linked (GlcNAc...) asparagine). N-linked (GlcNAc...) asparagine glycosylation is present at asparagine 513.

This sequence belongs to the venom metalloproteinase (M12B) family. P-III subfamily. P-IIIa sub-subfamily. Monomer. Zn(2+) serves as cofactor. Expressed by the venom gland.

It is found in the secreted. In terms of biological role, this metalloproteinase-disintegrin-like impairs hemostasis in the envenomed animal. The chain is Zinc metalloproteinase-disintegrin-like stejnihagin-B from Trimeresurus stejnegeri (Chinese green tree viper).